Reading from the N-terminus, the 535-residue chain is MKEALFGLYLVLLVSGLEAAVTKPNSGNFIECLRYQASPENPITDAIFTVDNTTTFLSSYVSYTKNTRFSNPNNKNLLAIVVAKDVSHVQATVVCAKSNGIQIRIRSGGHDNEGLSYVSSVPFVILDMHKLRDITVDVSSKKAWVQAGATLGELYVKIDEASQTLAFPAGICATVGAGGHISGGGYGNLMRKFGTTVDHVIDAELVDVNGKLLNRSTMGEDLFWAIRGGGGASFGVILSWKINLVEVPKIFTVFQVNKTLEQGGTDVVYKWQLVANKFPDNLFLRAMPQVVNGTKHGERTIAIVFWAQFLGRTDELMEIMNQSFPELGLRREDCQEMSWLNTTLFWAMLPAGTPKTVLLGRPTDPVFFKSKSDYVKKPIPKEGLEKIWKTMLKFNNIVWLHFNPYGGMMDRIPSNATAFPHRKGNLFKVQYYTTWLDPNATESNLSIMKELYEVAEPYVSSNPREAFFNYRDIDIGSNPSGETDVDEAKIYGYKYFLGNLKRLMDVKAKSDPENFFKNEQSIPPLLSRVRRDDEL.

Positions 1–19 are cleaved as a signal peptide; it reads MKEALFGLYLVLLVSGLEA. A disulfide bridge connects residues C32 and C95. N-linked (GlcNAc...) asparagine glycosylation occurs at N52. An FAD-binding PCMH-type domain is found at 73-247; it reads NNKNLLAIVV…LSWKINLVEV (175 aa). A cross-link (6-(S-cysteinyl)-8alpha-(pros-histidyl)-FAD (His-Cys)) is located at residues 110–172; it reads HDNEGLSYVS…QTLAFPAGIC (63 aa). N214, N257, N292, N321, N341, N415, N439, and N444 each carry an N-linked (GlcNAc...) asparagine glycan.

This sequence belongs to the oxygen-dependent FAD-linked oxidoreductase family. FAD is required as a cofactor. The FAD cofactor is bound via a bicovalent 6-S-cysteinyl, 8alpha-N1-histidyl FAD linkage.

Its subcellular location is the endoplasmic reticulum. It localises to the cell membrane. The protein resides in the secreted. The protein localises to the cell wall. In terms of biological role, flavin-dependent oxidoreductase involved in the biosynthetic pathway to 4-hydroxyindole-3-carbonyl nitrile (4-OH-ICN), a cyanogenic metabolite required for inducible pathogen defense. Converts indole cyanohydrin into indole-3-carbonyl nitrile (ICN). The sequence is that of Berberine bridge enzyme-like 3 from Arabidopsis thaliana (Mouse-ear cress).